The primary structure comprises 395 residues: Multidrug resistance protein MdtL (395 aa).

Helical transmembrane passes span 4–24 (FLLC…MYLV), 42–62 (IAFS…GKIA), 69–89 (PVAI…SRAS), 93–113 (LFLS…VVAF), 131–151 (LLNG…HLIM), 158–178 (SLFY…LFIL), 217–237 (VSVI…VMGF), 247–267 (ALTA…LGLF), 271–291 (TLML…SLAH), 295–315 (VTLF…GVAM), 328–350 (VASS…LAAI), and 355–377 (AMNM…IFSV).

It belongs to the major facilitator superfamily. DHA1 family. MdtL (TC 2.A.1.2.22) subfamily.

Its subcellular location is the cell inner membrane. The polypeptide is Multidrug resistance protein MdtL (Salmonella schwarzengrund (strain CVM19633)).